We begin with the raw amino-acid sequence, 151 residues long: Abdominal ganglion neuropeptide L11 (151 aa).

A signal peptide spans 1–25; sequence MPCTPNSHRLLLVTALCLLITSLFA.

It is found in the secreted. This Aplysia californica (California sea hare) protein is Abdominal ganglion neuropeptide L11.